Here is a 227-residue protein sequence, read N- to C-terminus: Uracil phosphoribosyltransferase (227 aa).

A GTP-binding site is contributed by 36–40 (KGLVK). 5-phospho-alpha-D-ribose 1-diphosphate-binding positions include arginine 86, arginine 111, and 145–153 (DPMLATGST). Uracil is bound by residues isoleucine 212 and 217–219 (GDA). Aspartate 218 is a binding site for 5-phospho-alpha-D-ribose 1-diphosphate.

This sequence belongs to the UPRTase family. The cofactor is Mg(2+).

The catalysed reaction is UMP + diphosphate = 5-phospho-alpha-D-ribose 1-diphosphate + uracil. Its pathway is pyrimidine metabolism; UMP biosynthesis via salvage pathway; UMP from uracil: step 1/1. With respect to regulation, allosterically activated by GTP. Functionally, catalyzes the conversion of uracil and 5-phospho-alpha-D-ribose 1-diphosphate (PRPP) to UMP and diphosphate. This is Uracil phosphoribosyltransferase from Halobacterium salinarum (strain ATCC 700922 / JCM 11081 / NRC-1) (Halobacterium halobium).